A 116-amino-acid polypeptide reads, in one-letter code: Protein Rev (116 aa).

Ser-5 is subject to Phosphoserine; by host CK2. The interval 18 to 26 (LIKILYQSN) is homomultimerization. The segment at 23–49 (YQSNPPPSPEGTRQARRNRRRRWRARQ) is disordered. The Nuclear localization signal and RNA-binding (RRE) motif lies at 34-50 (TRQARRNRRRRWRARQR). Residues 36–49 (QARRNRRRRWRARQ) show a composition bias toward basic residues. The short motif at 73-84 (LQLPPLERLNLN) is the Nuclear export signal and binding to XPO1 element. A disordered region spans residues 86–116 (SEDCGTSGTQGVGSPQISVESPTVLESGTEE). A phosphoserine; by host mark is found at Ser-92 and Ser-99.

This sequence belongs to the HIV-1 REV protein family. Homomultimer; when bound to the RRE. Multimeric assembly is essential for activity and may involve XPO1. Binds to human KPNB1, XPO1, TNPO1, RANBP5 and IPO7. Interacts with the viral Integrase. Interacts with human KHDRBS1. Interacts with human NAP1; this interaction decreases Rev multimerization and stimulates its activity. Interacts with human DEAD-box helicases DDX3 and DDX24; these interactions may serve for viral RNA export to the cytoplasm and packaging, respectively. Interacts with human PSIP1; this interaction may inhibit HIV-1 DNA integration by promoting dissociation of the Integrase-LEDGF/p75 complex. Post-translationally, asymmetrically arginine dimethylated at one site by host PRMT6. Methylation impairs the RNA-binding activity and export of viral RNA from the nucleus to the cytoplasm. In terms of processing, phosphorylated by protein kinase CK2. Presence of, and maybe binding to the N-terminus of the regulatory beta subunit of CK2 is necessary for CK2-mediated Rev's phosphorylation.

The protein resides in the host nucleus. The protein localises to the host nucleolus. Its subcellular location is the host cytoplasm. Functionally, escorts unspliced or incompletely spliced viral pre-mRNAs (late transcripts) out of the nucleus of infected cells. These pre-mRNAs carry a recognition sequence called Rev responsive element (RRE) located in the env gene, that is not present in fully spliced viral mRNAs (early transcripts). This function is essential since most viral proteins are translated from unspliced or partially spliced pre-mRNAs which cannot exit the nucleus by the pathway used by fully processed cellular mRNAs. Rev itself is translated from a fully spliced mRNA that readily exits the nucleus. Rev's nuclear localization signal (NLS) binds directly to KPNB1/Importin beta-1 without previous binding to KPNA1/Importin alpha-1. KPNB1 binds to the GDP bound form of RAN (Ran-GDP) and targets Rev to the nucleus. In the nucleus, the conversion from Ran-GDP to Ran-GTP dissociates Rev from KPNB1 and allows Rev's binding to the RRE in viral pre-mRNAs. Rev multimerization on the RRE via cooperative assembly exposes its nuclear export signal (NES) to the surface. Rev can then form a complex with XPO1/CRM1 and Ran-GTP, leading to nuclear export of the complex. Conversion from Ran-GTP to Ran-GDP mediates dissociation of the Rev/RRE/XPO1/RAN complex, so that Rev can return to the nucleus for a subsequent round of export. Beside KPNB1, also seems to interact with TNPO1/Transportin-1, RANBP5/IPO5 and IPO7/RANBP7 for nuclear import. The nucleoporin-like HRB/RIP is an essential cofactor that probably indirectly interacts with Rev to release HIV RNAs from the perinuclear region to the cytoplasm. In Homo sapiens (Human), this protein is Protein Rev.